Reading from the N-terminus, the 125-residue chain is Protein ApaG (125 aa).

Positions 1–125 (MINSPRVCIQ…FRLAVPTLIH (125 aa)) constitute an ApaG domain.

This chain is Protein ApaG, found in Escherichia coli (strain SE11).